Consider the following 350-residue polypeptide: Putative ankyrin repeat protein RBE_0589 (350 aa).

3 ANK repeats span residues 81-110 (DGFTLLHKSINERDYNIAGFLLERKANPNI), 114-151 (DIVTPLNRIAGKPLSKTEEDFHMAKLLLQKGALTEPTD), and 153-182 (SGWTPIQYAVFNEKIGIVELLIDYGANLDI).

The sequence is that of Putative ankyrin repeat protein RBE_0589 from Rickettsia bellii (strain RML369-C).